The chain runs to 165 residues: Large ribosomal subunit protein uL30 (165 aa).

It belongs to the universal ribosomal protein uL30 family. As to quaternary structure, part of the 50S ribosomal subunit.

This chain is Large ribosomal subunit protein uL30, found in Thermoplasma volcanium (strain ATCC 51530 / DSM 4299 / JCM 9571 / NBRC 15438 / GSS1).